A 158-amino-acid polypeptide reads, in one-letter code: Inorganic pyrophosphatase (158 aa).

Mg(2+) is bound at residue E8. Residues K16, R30, and Y42 each coordinate substrate. Residues D52, D57, D84, and D89 each contribute to the Mg(2+) site. The active-site Proton acceptor is the D89. A substrate-binding site is contributed by Y125.

Belongs to the PPase family. In terms of assembly, homohexamer. The cofactor is Mg(2+).

It is found in the cytoplasm. It catalyses the reaction diphosphate + H2O = 2 phosphate + H(+). In terms of biological role, catalyzes the hydrolysis of inorganic pyrophosphate (PPi) forming two phosphate ions. The sequence is that of Inorganic pyrophosphatase from Corynebacterium glutamicum (strain ATCC 13032 / DSM 20300 / JCM 1318 / BCRC 11384 / CCUG 27702 / LMG 3730 / NBRC 12168 / NCIMB 10025 / NRRL B-2784 / 534).